The sequence spans 86 residues: MTEVKTFMVKGAALFNESEFPVRQSFTKYVRALNEEQAKEKVYMDLGSKNKIKRRNITFLEIKEVDPSTVKEKRIKELSKIDKIIL.

Belongs to the eukaryotic ribosomal protein eL20 family. Part of the 50S ribosomal subunit. Binds 23S rRNA.

This chain is Large ribosomal subunit protein eL20, found in Metallosphaera sedula (strain ATCC 51363 / DSM 5348 / JCM 9185 / NBRC 15509 / TH2).